The following is a 72-amino-acid chain: U-poneritoxin(01)-Om7a (72 aa).

The N-terminal stretch at 1 to 27 (MKPSGLTFAFLVVFMMAIMYNSVQVTA) is a signal peptide. The propeptide occupies 28–45 (DADADAEAEALANALAEA).

The protein belongs to the formicidae venom precursor-01 superfamily. As to expression, expressed by the venom gland.

The protein localises to the secreted. Peptide with unknown function that does not resemble any other pilosulin-like peptide and appears to have a coiled coil structure. This Odontomachus monticola (Trap-jaw ant) protein is U-poneritoxin(01)-Om7a.